A 718-amino-acid polypeptide reads, in one-letter code: MIVDKLLDDSRGGEGLRDAAGGCGLMTSPLNLSYFYGASPPAAAPGACDASCSVLGPSAPGSPGSDSSDFSSASSVSSCGAVESRSRGGARAERQPVEPHMGVGRQQRGPFQGVRVKNSVKELLLHIRSHKQKASGQAVDDFKTQGVNIEQFRELKNTVSYSGKRKGPDSLSDGPACKRPALLHSQFLTPPQTPTPGESMEDVHLNEPKQESSADLLQNIINIKNECSPVSLNTVQVSWLNPVVVPQSSPAEQCQDFHGGQVFSPPQKCQPFQVRGSQQMIDQASLYQYSPQNQHVEQQPHYTHKPTLEYSPFPIPPQSPAYEPNLFDGPESQFCPNQSLVSLLGDQRESENIANPMQTSSSVQQQNDAHLHSFSMMPSSACEAMVGHEMASDSSNTSLPFSNMGNPMNTTQLGKSLFQWQVEQEESKLANISQDQFLSKDADGDTFLHIAVAQGRRALSYVLARKMNALHMLDIKEHNGQSAFQVAVAANQHLIVQDLVNIGAQVNTTDCWGRTPLHVCAEKGHSQVLQAIQKGAVGSNQFVDLEATNYDGLTPLHCAVIAHNAVVHELQRNQQPHSPEVQELLLKNKSLVDTIKCLIQMGAAVEAKDRKSGRTALHLAAEEANLELIRLFLELPSCLSFVNAKAYNGNTALHVAASLQYRLTQLDAVRLLMRKGADPSTRNLENEQPVHLVPDGPVGEQIRRILKGKSIQQRAPPY.

A compositionally biased stretch (basic and acidic residues) spans M1–R17. 2 disordered regions span residues M1–A20 and S58–R108. Residues S58–E83 are compositionally biased toward low complexity. Residues S84 to V97 are compositionally biased toward basic and acidic residues. In terms of domain architecture, OCA spans R108–H130. The Nuclear localization signal motif lies at K164–R179. A disordered region spans residues Q186–E211. The segment covering E201 to E211 has biased composition (basic and acidic residues). Positions A321–S394 are required for transcriptional activity. An interaction with NFKB1/p50 region spans residues M404–Y718. ANK repeat units lie at residues D443–M472, N479–T508, W512–Q541, D551–E580, Q582–A607, S612–F641, and N648–T681.

In terms of assembly, interacts with NFKB1/p50. Interacts with RELA. Interacts with AKIRIN2. As to expression, expressed at high levels in peripheral blood leukocytes and lung, at moderate levels in liver, placenta, and at low levels in spleen, kidney, skeletal muscle and heart.

Its subcellular location is the nucleus. In terms of biological role, involved in regulation of NF-kappa-B transcription factor complexes. Inhibits NF-kappa-B activity without affecting its nuclear translocation upon stimulation. Inhibits DNA-binding of RELA and NFKB1/p50, and of the NF-kappa-B p65-p50 heterodimer and the NF-kappa-B p50-p50 homodimer. Also seems to activate NF-kappa-B-mediated transcription. In vitro, upon association with NFKB1/p50 has transcriptional activation activity and, together with NFKB1/p50 and RELA, is recruited to LCN2 promoters. Promotes transcription of LCN2 and DEFB4. Is recruited to IL-6 promoters and activates IL-6 but decreases TNF-alpha production in response to LPS. Seems to be involved in the induction of inflammatory genes activated through TLR/IL-1 receptor signaling. Involved in the induction of T helper 17 cells (Th17) differentiation upon recognition of antigen by T cell antigen receptor (TCR). The sequence is that of NF-kappa-B inhibitor zeta (NFKBIZ) from Homo sapiens (Human).